A 454-amino-acid polypeptide reads, in one-letter code: Histidine--tRNA ligase (454 aa).

Positions 434-454 (ADAGAWNPPTEDLHPGVIGTW) are disordered.

This sequence belongs to the class-II aminoacyl-tRNA synthetase family. As to quaternary structure, homodimer.

The protein resides in the cytoplasm. The enzyme catalyses tRNA(His) + L-histidine + ATP = L-histidyl-tRNA(His) + AMP + diphosphate + H(+). The sequence is that of Histidine--tRNA ligase (hisS) from Cutibacterium acnes (strain DSM 16379 / KPA171202) (Propionibacterium acnes).